The sequence spans 107 residues: Universal stress protein B homolog (107 aa).

2 helical membrane passes run 6–25 (TILFALMLVTAINVARYVTA) and 89–106 (LFILSGSLLVLTTVVAFM).

The protein belongs to the universal stress protein B family.

The protein localises to the cell inner membrane. This chain is Universal stress protein B homolog, found in Vibrio cholerae serotype O1 (strain ATCC 39541 / Classical Ogawa 395 / O395).